Here is a 153-residue protein sequence, read N- to C-terminus: Large ribosomal subunit protein uL22 (153 aa).

It belongs to the universal ribosomal protein uL22 family. As to quaternary structure, part of the 50S ribosomal subunit.

This protein binds specifically to 23S rRNA. It makes multiple contacts with different domains of the 23S rRNA in the assembled 50S subunit and ribosome. Its function is as follows. The globular domain of the protein is located near the polypeptide exit tunnel on the outside of the subunit, while an extended beta-hairpin is found that lines the wall of the exit tunnel in the center of the 70S ribosome. The protein is Large ribosomal subunit protein uL22 of Methanococcus maripaludis (strain DSM 14266 / JCM 13030 / NBRC 101832 / S2 / LL).